The sequence spans 759 residues: Cullin-4A (759 aa).

Lys8 participates in a covalent cross-link: Glycyl lysine isopeptide (Lys-Gly) (interchain with G-Cter in SUMO2). Ser10 is subject to Phosphoserine. A Glycyl lysine isopeptide (Lys-Gly) (interchain with G-Cter in ubiquitin) cross-link involves residue Lys33. Residues 691–751 (DRQYQIDAAI…RDYMERDKDN (61 aa)) enclose the Cullin neddylation domain. A Glycyl lysine isopeptide (Lys-Gly) (interchain with G-Cter in NEDD8) cross-link involves residue Lys705.

Belongs to the cullin family. As to quaternary structure, can self-associate. Component of multiple DCX (DDB1-CUL4-X-box) E3 ubiquitin-protein ligase complexes that seem to consist of DDB1, CUL4A or CUL4B, RBX1 and a variable substrate recognition component which seems to belong to a protein family described as DCAF (Ddb1- and Cul4-associated factor) or CDW (CUL4-DDB1-associated WD40-repeat) proteins. Component of the CSA complex (DCX(ERCC8) complex) containing ERCC8, RBX1, DDB1 and CUL4A; the CSA complex interacts with RNA polymerase II; upon UV irradiation it interacts with the COP9 signalosome and preferentially with the hyperphosphorylated form of RNA polymerase II. Component of the DCX(DET1-COP1) complex with the substrate recognition component DET1 and COP1. Component of the DCX(DDB2) complex with the substrate recognition component DDB2. Component of the DCX(DTL) complex with the putative substrate recognition component DTL. Component of DCX complexes part of the DesCEND (destruction via C-end degrons) pathway, which contain either TRPC4AP or DCAF12 as substrate-recognition component. Component of the DCX(AMBRA1) complex with the substrate recognition component AMBRA1. Interacts with DDB1, RBX1, RNF7, CDT1, TIP120A/CAND1, SKP2, CDKN1B, MDM2, TP53 and HOXA9. Interacts with DDB2; the interactions with DDB2 and CAND1 are mutually exclusive. Interacts with DCAF1, DTL, DDA1, DCAF6, DCAF4, DCAF16, DCAF17, DET1, WDTC1, DCAF5, DCAF11, WDR24A, COP1, PAFAH1B1, ERCC8, GRWD1, FBXW5, RBBP7, GNB2, WSB1, WSB2, NUP43, PWP1, FBXW8, ATG16L1, KATNB1, RBBP4, RBBP5, LRWD1 and DCAF8. May interact with WDR26, WDR51B, SNRNP40, WDR61, WDR76, WDR5. Interacts (when neddylated) with ARIH1; leading to activate the E3 ligase activity of ARIH1. The DDB1-CUL4A complex interacts with CRY1. Interacts (unneddylated form) with DCUN1D1, DCUN1D2, DCUN1D3, DCUN1D4 and DCUN1D5; these interactions promote the cullin neddylation. In terms of assembly, (Microbial infection) Interacts with Epstein-Barr virus BPLF1. Post-translationally, neddylated; required for activity of cullin-RING-based E3 ubiquitin-protein ligase complexes. Deneddylated via its interaction with the COP9 signalosome (CSN) complex. (Microbial infection) Deneddylated by Epstein-Barr virus BPLF1 leading to a S-phase-like environment that is required for efficient replication of the viral genome.

Its pathway is protein modification; protein ubiquitination. Functionally, core component of multiple cullin-RING-based E3 ubiquitin-protein ligase complexes which mediate the ubiquitination of target proteins. As a scaffold protein may contribute to catalysis through positioning of the substrate and the ubiquitin-conjugating enzyme. The E3 ubiquitin-protein ligase activity of the complex is dependent on the neddylation of the cullin subunit and is inhibited by the association of the deneddylated cullin subunit with TIP120A/CAND1. The functional specificity of the E3 ubiquitin-protein ligase complex depends on the variable substrate recognition component. DCX(DET1-COP1) directs ubiquitination of JUN. DCX(DDB2) directs ubiquitination of XPC. DCX(DDB2) ubiquitinates histones H3-H4 and is required for efficient histone deposition during replication-coupled (H3.1) and replication-independent (H3.3) nucleosome assembly, probably by facilitating the transfer of H3 from ASF1A/ASF1B to other chaperones involved in histone deposition. DCX(DTL) plays a role in PCNA-dependent polyubiquitination of CDT1 and MDM2-dependent ubiquitination of p53/TP53 in response to radiation-induced DNA damage and during DNA replication. DCX(DTL) directs autoubiquitination of DTL. In association with DDB1 and SKP2 probably is involved in ubiquitination of CDKN1B/p27kip. Is involved in ubiquitination of HOXA9. The DDB1-CUL4A-DTL E3 ligase complex regulates the circadian clock function by mediating the ubiquitination and degradation of CRY1. The DCX(ERCC8) complex (also named CSA complex) plays a role in transcription-coupled repair (TCR). A number of DCX complexes (containing either TRPC4AP or DCAF12 as substrate-recognition component) are part of the DesCEND (destruction via C-end degrons) pathway, which recognizes a C-degron located at the extreme C terminus of target proteins, leading to their ubiquitination and degradation. The DCX(AMBRA1) complex is a master regulator of the transition from G1 to S cell phase by mediating ubiquitination of phosphorylated cyclin-D (CCND1, CCND2 and CCND3). The DCX(AMBRA1) complex also acts as a regulator of Cul5-RING (CRL5) E3 ubiquitin-protein ligase complexes by mediating ubiquitination and degradation of Elongin-C (ELOC) component of CRL5 complexes. With CUL4B, contributes to ribosome biogenesis. The protein is Cullin-4A of Homo sapiens (Human).